Reading from the N-terminus, the 307-residue chain is Tropinone reductase homolog At2g29340 (307 aa).

Residue 13–37 coordinates NADP(+); sequence LVTGGASGIGYAIVEELAGFGARIH. A substrate-binding site is contributed by serine 146. The Proton acceptor role is filled by tyrosine 159.

This sequence belongs to the short-chain dehydrogenases/reductases (SDR) family. SDR65C subfamily.

This Arabidopsis thaliana (Mouse-ear cress) protein is Tropinone reductase homolog At2g29340.